The sequence spans 403 residues: tRNA pseudouridine synthase D (403 aa).

The segment covering Met-1–Ile-10 has biased composition (basic and acidic residues). Residues Met-1 to Gln-24 form a disordered region. Asp-92 functions as the Nucleophile in the catalytic mechanism. Residues Gly-192–Leu-354 enclose the TRUD domain. Residues Ala-217–Asn-240 are disordered.

The protein belongs to the pseudouridine synthase TruD family.

The catalysed reaction is uridine(13) in tRNA = pseudouridine(13) in tRNA. In terms of biological role, responsible for synthesis of pseudouridine from uracil-13 in transfer RNAs. In Psychrobacter arcticus (strain DSM 17307 / VKM B-2377 / 273-4), this protein is tRNA pseudouridine synthase D.